A 404-amino-acid chain; its full sequence is Protein ARK2N (404 aa).

Composition is skewed to basic and acidic residues over residues 1–12 and 23–32; these read MKMEEAVGKVEE and SEQETAKEED. 2 disordered regions span residues 1–50 and 63–255; these read MKME…ADST and RRDS…TNSD. Ser-66 is subject to Phosphoserine. The residue at position 67 (Ser-67) is a Phosphoserine; by AMPK. The segment covering 87–121 has biased composition (polar residues); sequence SDSSNHCMLSPSSSGHLADSDTLSSAEENEPSQAE. Ser-143, Ser-145, and Ser-147 each carry phosphoserine. The span at 169 to 187 shows a compositional bias: basic residues; the sequence is AKVKGHRSQKHKERIRLLR. Residues 175–200 are a coiled coil; sequence RSQKHKERIRLLRQKREAAARKKYNL. A required for interaction with CSNK2B region spans residues 202–226; sequence QDSSTSDSDLTCDSSTSSSDDDEEV. Positions 203–219 are enriched in low complexity; sequence DSSTSDSDLTCDSSTSS. A phosphoserine mark is found at Ser-327, Ser-328, and Ser-330. Arg-347 bears the Omega-N-methylarginine mark. Residue Lys-358 forms a Glycyl lysine isopeptide (Lys-Gly) (interchain with G-Cter in SUMO2) linkage.

As to quaternary structure, interacts with CSNK2B (via KSSR). Interacts with JUN; the interaction is mediated by CSNK2B. Phosphorylated at Ser-67 by AMPK. In skeletal muscle, phosphorylation is induced by exercise and seems to increase muscle contractile function. As to expression, expressed in skeletal muscle.

Its subcellular location is the nucleus. Its function is as follows. AMPK substrate important for exercise capacity and skeletal muscle function. Required for normal contraction-induced signaling. (Microbial infection) Upon Epstein-Barr virus (EBV) infection, suppresses viral BZLF1 expression and subsequent EBV reactivation by interacting with JUN and inhibiting its transcriptional activator activity on BZLF1 Z promoter. The polypeptide is Protein ARK2N (Homo sapiens (Human)).